The following is a 115-amino-acid chain: Ribonuclease P protein component (115 aa).

Belongs to the RnpA family. Consists of a catalytic RNA component (M1 or rnpB) and a protein subunit.

It carries out the reaction Endonucleolytic cleavage of RNA, removing 5'-extranucleotides from tRNA precursor.. In terms of biological role, RNaseP catalyzes the removal of the 5'-leader sequence from pre-tRNA to produce the mature 5'-terminus. It can also cleave other RNA substrates such as 4.5S RNA. The protein component plays an auxiliary but essential role in vivo by binding to the 5'-leader sequence and broadening the substrate specificity of the ribozyme. The polypeptide is Ribonuclease P protein component (Macrococcus caseolyticus (strain JCSC5402) (Macrococcoides caseolyticum)).